A 587-amino-acid chain; its full sequence is NADH-quinone oxidoreductase subunit C/D (587 aa).

The tract at residues 1–178 (MAAPTTEHAE…EPFSLPDDVQ (178 aa)) is NADH dehydrogenase I subunit C. An NADH dehydrogenase I subunit D region spans residues 202-587 (DFLFLNLGPN…IDFVMADVDR (386 aa)).

It in the N-terminal section; belongs to the complex I 30 kDa subunit family. The protein in the C-terminal section; belongs to the complex I 49 kDa subunit family. NDH-1 is composed of 13 different subunits. Subunits NuoB, CD, E, F, and G constitute the peripheral sector of the complex.

It is found in the cell inner membrane. It catalyses the reaction a quinone + NADH + 5 H(+)(in) = a quinol + NAD(+) + 4 H(+)(out). NDH-1 shuttles electrons from NADH, via FMN and iron-sulfur (Fe-S) centers, to quinones in the respiratory chain. The immediate electron acceptor for the enzyme in this species is believed to be ubiquinone. Couples the redox reaction to proton translocation (for every two electrons transferred, four hydrogen ions are translocated across the cytoplasmic membrane), and thus conserves the redox energy in a proton gradient. This chain is NADH-quinone oxidoreductase subunit C/D, found in Methylococcus capsulatus (strain ATCC 33009 / NCIMB 11132 / Bath).